A 358-amino-acid polypeptide reads, in one-letter code: 5,10-methenyltetrahydromethanopterin hydrogenase (358 aa).

This sequence belongs to the HMD family. As to quaternary structure, homotetramer.

It carries out the reaction 5,10-methenyl-5,6,7,8-tetrahydromethanopterin + H2 = 5,10-methylenetetrahydromethanopterin + H(+). The protein operates within one-carbon metabolism; methanogenesis from CO(2); 5,10-methylene-5,6,7,8-tetrahydromethanopterin from 5,10-methenyl-5,6,7,8-tetrahydromethanopterin (hydrogen route): step 1/1. Its activity is regulated as follows. Activity requires salt; 100 mM potassium phosphate, potassium chloride, and sodium chloride are equally effective. Its function is as follows. Catalyzes the reversible reduction of methenyl-H(4)MPT(+) to methylene-H(4)MPT. This chain is 5,10-methenyltetrahydromethanopterin hydrogenase, found in Methanopyrus kandleri (strain AV19 / DSM 6324 / JCM 9639 / NBRC 100938).